Consider the following 382-residue polypeptide: Mannitol-1-phosphate 5-dehydrogenase (382 aa).

3–14 (ALHFGAGNIGRG) is an NAD(+) binding site. K269 carries the N6-acetyllysine modification.

It belongs to the mannitol dehydrogenase family.

The catalysed reaction is D-mannitol 1-phosphate + NAD(+) = beta-D-fructose 6-phosphate + NADH + H(+). In Escherichia coli (strain K12 / MC4100 / BW2952), this protein is Mannitol-1-phosphate 5-dehydrogenase.